The sequence spans 693 residues: Elongation factor G (693 aa).

The 275-residue stretch at 8 to 282 folds into the tr-type G domain; sequence EKFRNFGIMA…AVVDYLPSPI (275 aa). Residues 17–24, 81–85, and 135–138 each bind GTP; these read AHIDAGKT, DTPGH, and NKMD.

The protein belongs to the TRAFAC class translation factor GTPase superfamily. Classic translation factor GTPase family. EF-G/EF-2 subfamily.

The protein resides in the cytoplasm. Catalyzes the GTP-dependent ribosomal translocation step during translation elongation. During this step, the ribosome changes from the pre-translocational (PRE) to the post-translocational (POST) state as the newly formed A-site-bound peptidyl-tRNA and P-site-bound deacylated tRNA move to the P and E sites, respectively. Catalyzes the coordinated movement of the two tRNA molecules, the mRNA and conformational changes in the ribosome. This is Elongation factor G from Mycoplasmoides gallisepticum (strain R(low / passage 15 / clone 2)) (Mycoplasma gallisepticum).